The sequence spans 434 residues: Enolase 2 (434 aa).

Residue Gln171 coordinates (2R)-2-phosphoglycerate. Glu213 serves as the catalytic Proton donor. Residues Asp250, Glu293, and Asp320 each coordinate Mg(2+). (2R)-2-phosphoglycerate contacts are provided by Lys345, Arg374, Ser375, and Lys396. Lys345 acts as the Proton acceptor in catalysis.

Belongs to the enolase family. The cofactor is Mg(2+).

The protein localises to the cytoplasm. Its subcellular location is the secreted. The protein resides in the cell surface. The catalysed reaction is (2R)-2-phosphoglycerate = phosphoenolpyruvate + H2O. It participates in carbohydrate degradation; glycolysis; pyruvate from D-glyceraldehyde 3-phosphate: step 4/5. Its function is as follows. Catalyzes the reversible conversion of 2-phosphoglycerate (2-PG) into phosphoenolpyruvate (PEP). It is essential for the degradation of carbohydrates via glycolysis. The sequence is that of Enolase 2 from Streptomyces coelicolor (strain ATCC BAA-471 / A3(2) / M145).